The following is an 8797-amino-acid chain: Nesprin-1 (8797 aa).

The segment at 1 to 289 (MATSRGASRC…KHYPDIHNAS (289 aa)) is actin-binding. Residues 1 to 8746 (MATSRGASRC…GRGFLFRVLR (8746 aa)) lie on the Cytoplasmic side of the membrane. 2 Calponin-homology (CH) domains span residues 27–134 (IVQK…LYFQ) and 178–283 (GNAK…KHYP). Spectrin repeat units lie at residues 314–397 (REDR…SRLF), 398–502 (DWHI…HLMK), 503–609 (MEFL…SMLE), 610–703 (EVIS…YAQA), 704–815 (DEMD…QLLI), 816–923 (PLEE…KHVE), 924–1024 (TNSR…HLKI), 1025–1122 (DVEK…LMED), 1123–1246 (PDKW…NSLE), 1247–1335 (ELIS…ERRI), 1336–1444 (QVTL…MEMV), 1445–1550 (KTKW…ILGH), 1551–1653 (LSQQ…LENL), 1654–1763 (LAHW…LQSV), 1764–1879 (VAEH…SHAS), 1880–1976 (LSGI…ADAL), 1977–2081 (AVLK…QGQC), 2082–2195 (CGLI…LRVS), 2196–2303 (LSIW…KDFT), 2304–2401 (AQST…KTQA), 2402–2513 (SLQE…LQDC), 2514–2619 (ASEL…LRSC), 2620–2731 (QVAL…LESV), 2732–2838 (ISQW…VEEI), 2839–2962 (VKDH…SGQV), 2963–3062 (AQLE…QNKE), 3063–3171 (QILQ…LENL), 3172–3275 (KIQM…VSRL), 3276–3387 (DRIV…LEGA), 3388–3490 (LSKW…SEKL), 3491–3593 (VRLH…RTQF), 3594–3720 (NNVV…YSDW), 3721–3814 (YGST…LEKG), 3815–3920 (LHLA…LEAK), 3921–4028 (VKDH…QRMY), 4029–4139 (QSLE…KHLK), 4140–4235 (SELW…REED), 4236–4339 (LQRT…IQVS), 4340–4451 (VTNL…LNKA), 4452–4560 (LSEK…LEKN), 4561–4669 (LVSR…VQEA), 4670–4776 (ILAR…LEDT), 4777–4882 (TSAY…CESR), 4883–4991 (MVQS…LTEI), 4992–5099 (YSQC…LQRC), 5100–5209 (TAQW…LEDA), 5210–5318 (VDEW…GKLV), 5319–5424 (KQEL…EQSK), 5425–5522 (ATSQ…LSKL), 5523–5630 (NQAA…LQDA), 5631–5736 (AKDM…MQEA), and 5737–5842 (VVQY…PSAH). The stretch at 314–8666 (REDRVIFKEM…EKLLDVSSSQ (8353 aa)) forms a coiled coil. Ser-732 carries the post-translational modification Phosphoserine. Phosphothreonine is present on Thr-2270. Residue Ser-5657 is modified to Phosphoserine. A disordered region spans residues 5859–5886 (PVTEESGEEGTNSEISSPPACRSPSPVA). Spectrin repeat units lie at residues 5962–6071 (LERQ…LEEK), 6072–6178 (LNDQ…SLLE), 6374–6485 (RQSI…RLQQ), 6486–6581 (ILNF…RSGL), 6582–6691 (NQNL…LETW), 6692–6795 (SHLD…TILK), 6796–6902 (HWTR…QEKL), 6903–7020 (HQLQ…LEGL), 7021–7128 (LESW…LKSV), 7129–7237 (LDQW…SKAL), 7238–7350 (LQLW…LQAG), 7351–7454 (VLDY…LQSF), 7455–7558 (LLQH…RGII), 7559–7671 (DSQI…LAFL), 7672–7783 (LKDW…NEWA), 7784–7883 (VFSE…LKET), 7884–7997 (LVAV…IEET), 7998–8106 (WRLW…LKHF), and 8107–8216 (IGQR…LPLP). Position 8223 is a phosphoserine (Ser-8223). Residues 8246-8279 (DSLLSPQPSSNLSLSLAQPLRSERSGRDTPASVD) form a disordered region. Over residues 8247–8265 (SLLSPQPSSNLSLSLAQPL) the composition is skewed to low complexity. A Phosphothreonine modification is found at Thr-8274. Residues Ser-8277, Ser-8280, and Ser-8305 each carry the phosphoserine modification. 3 Spectrin repeats span residues 8329–8438 (SALE…MKQN), 8439–8548 (LQKW…LQDA), and 8549–8666 (LMQC…SSSQ). Thr-8360 is modified (phosphothreonine). A disordered region spans residues 8671-8734 (SWSSADELDT…DSSLSEPGPG (64 aa)). Composition is skewed to polar residues over residues 8680–8696 (TSGS…PNRQ) and 8704–8729 (SLSQ…SSLS). The KASH domain maps to 8738-8797 (RGFLFRVLRAALPLQLLLLLLIGLACLVPMSEEDYSCALSNNFARSFHPMLRYTNGPPPL). The chain crosses the membrane as a helical; Anchor for type IV membrane protein span at residues 8747 to 8767 (AALPLQLLLLLLIGLACLVPM). Over 8768 to 8797 (SEEDYSCALSNNFARSFHPMLRYTNGPPPL) the chain is Perinuclear space.

Belongs to the nesprin family. As to quaternary structure, core component of LINC complexes which are composed of inner nuclear membrane SUN domain-containing proteins coupled to outer nuclear membrane KASH domain-containing nesprins. SUN and KASH domain-containing proteins seem to bind each other promiscuously; however, differentially expression of LINC complex constituents can give rise to specific assemblies. At least SUN1/2-containing core LINC complexes are proposed to be hexameric composed of three protomers of each KASH and SUN domain-containing protein. The SUN2:SYNE1/KASH1 LINC complex is a heterohexamer; the homotrimeric cloverleave-like conformation of the SUN domain is a prerequisite for LINC complex formation in which three separate SYNE1/KASH1 peptides bind at the interface of adjacent SUN domains. Self-associates. Interacts with SYNE3. Interacts with SPAG4/SUN4. May interact with MUSK. Interacts with F-actin via its N-terminal domain. Interacts with EMD and LMNA in vitro. Interacts (via KASH domain) with TMEM258. In terms of processing, the disulfid bond with SUN1 or SUN2 is required for stability of the respective LINC complex under tensile forces. Expressed in HeLa, A431, A172 and HaCaT cells (at protein level). Widely expressed. Highly expressed in skeletal and smooth muscles, heart, spleen, peripheral blood leukocytes, pancreas, cerebellum, stomach, kidney and placenta. Isoform GSRP-56 is predominantly expressed in heart and skeletal muscle (at protein level).

The protein localises to the nucleus outer membrane. Its subcellular location is the nucleus. It is found in the nucleus envelope. It localises to the cytoplasm. The protein resides in the cytoskeleton. The protein localises to the myofibril. Its subcellular location is the sarcomere. It is found in the golgi apparatus. Multi-isomeric modular protein which forms a linking network between organelles and the actin cytoskeleton to maintain the subcellular spatial organization. As a component of the LINC (LInker of Nucleoskeleton and Cytoskeleton) complex involved in the connection between the nuclear lamina and the cytoskeleton. The nucleocytoplasmic interactions established by the LINC complex play an important role in the transmission of mechanical forces across the nuclear envelope and in nuclear movement and positioning. May be involved in nucleus-centrosome attachment and nuclear migration in neural progenitors implicating LINC complex association with SUN1/2 and probably association with cytoplasmic dynein-dynactin motor complexes; SYNE1 and SYNE2 may act redundantly. Required for centrosome migration to the apical cell surface during early ciliogenesis. May be involved in nuclear remodeling during sperm head formation in spermatogenesis; a probable SUN3:SYNE1/KASH1 LINC complex may tether spermatid nuclei to posterior cytoskeletal structures such as the manchette. In Homo sapiens (Human), this protein is Nesprin-1.